A 576-amino-acid polypeptide reads, in one-letter code: Aspartate--tRNA ligase, cytoplasmic 1 (576 aa).

Residues 1 to 78 (MSETTPVPVG…NWGELPMNQS (78 aa)) are disordered. A compositionally biased stretch (basic and acidic residues) spans 20–43 (LKKEQKKLEKEKKIAEAKAKKAAE). E302 provides a ligand contact to L-aspartate. An aspartate region spans residues 324 to 327 (QLYK). R346 is an L-aspartate binding site. ATP-binding positions include 346–348 (RAE), 354–356 (RHL), and E499. Residues S502 and R506 each coordinate L-aspartate. 547-550 (GLER) contributes to the ATP binding site.

This sequence belongs to the class-II aminoacyl-tRNA synthetase family. Type 2 subfamily.

Its subcellular location is the cytoplasm. The enzyme catalyses tRNA(Asp) + L-aspartate + ATP = L-aspartyl-tRNA(Asp) + AMP + diphosphate. In Dictyostelium discoideum (Social amoeba), this protein is Aspartate--tRNA ligase, cytoplasmic 1 (aspS1).